The chain runs to 438 residues: Enolase (438 aa).

(2R)-2-phosphoglycerate is bound at residue Gln-163. Glu-205 acts as the Proton donor in catalysis. Residues Asp-243, Glu-292, and Asp-319 each contribute to the Mg(2+) site. 4 residues coordinate (2R)-2-phosphoglycerate: Lys-344, Arg-373, Ser-374, and Lys-395. Residue Lys-344 is the Proton acceptor of the active site.

It belongs to the enolase family. It depends on Mg(2+) as a cofactor.

It localises to the cytoplasm. Its subcellular location is the secreted. The protein localises to the cell surface. It catalyses the reaction (2R)-2-phosphoglycerate = phosphoenolpyruvate + H2O. It participates in carbohydrate degradation; glycolysis; pyruvate from D-glyceraldehyde 3-phosphate: step 4/5. In terms of biological role, catalyzes the reversible conversion of 2-phosphoglycerate (2-PG) into phosphoenolpyruvate (PEP). It is essential for the degradation of carbohydrates via glycolysis. This Streptococcus agalactiae protein is Enolase.